The primary structure comprises 478 residues: Proline--tRNA ligase (478 aa).

Belongs to the class-II aminoacyl-tRNA synthetase family. ProS type 3 subfamily. In terms of assembly, homodimer.

It is found in the cytoplasm. It carries out the reaction tRNA(Pro) + L-proline + ATP = L-prolyl-tRNA(Pro) + AMP + diphosphate. In terms of biological role, catalyzes the attachment of proline to tRNA(Pro) in a two-step reaction: proline is first activated by ATP to form Pro-AMP and then transferred to the acceptor end of tRNA(Pro). This is Proline--tRNA ligase from Methanothrix thermoacetophila (strain DSM 6194 / JCM 14653 / NBRC 101360 / PT) (Methanosaeta thermophila).